Reading from the N-terminus, the 448-residue chain is N-succinylarginine dihydrolase (448 aa).

Substrate is bound by residues 19-28 (GGLSYGNVAS), Asn-110, and 137-138 (HR). Glu-174 is a catalytic residue. Arg-214 provides a ligand contact to substrate. The active site involves His-250. Residues Asp-252 and Asn-365 each coordinate substrate. The active-site Nucleophile is the Cys-371.

Belongs to the succinylarginine dihydrolase family. In terms of assembly, homodimer.

The catalysed reaction is N(2)-succinyl-L-arginine + 2 H2O + 2 H(+) = N(2)-succinyl-L-ornithine + 2 NH4(+) + CO2. It participates in amino-acid degradation; L-arginine degradation via AST pathway; L-glutamate and succinate from L-arginine: step 2/5. In terms of biological role, catalyzes the hydrolysis of N(2)-succinylarginine into N(2)-succinylornithine, ammonia and CO(2). The polypeptide is N-succinylarginine dihydrolase (Pseudomonas fluorescens (strain SBW25)).